The primary structure comprises 769 residues: Phosphatidylinositol 4-phosphate 5-kinase 8 (769 aa).

MORN repeat units follow at residues 16 to 38 (YSGQ…DGII), 39 to 61 (YEGD…SGAK), 62 to 84 (YEGD…DGSV), 85 to 107 (YAGA…NSDV), 108 to 130 (YDGS…NGNR), 131 to 153 (FIGN…NGDL), 154 to 176 (FNGF…DGGF), and 177 to 198 (YFGT…AGSK). Positions 266–289 (PPRDFMHHGPSSKSARSVDSGQSE) are disordered. Positions 276–288 (SSKSARSVDSGQS) are enriched in polar residues. One can recognise a PIPK domain in the interval 344–765 (WNHYLMLNLQ…RFIDFLLKVF (422 aa)). The interval 725–746 (YNMKKKVEHTCKSMKYDPMTIS) is activation loop.

It carries out the reaction a 1,2-diacyl-sn-glycero-3-phospho-(1D-myo-inositol 4-phosphate) + ATP = a 1,2-diacyl-sn-glycero-3-phospho-(1D-myo-inositol-4,5-bisphosphate) + ADP + H(+). The sequence is that of Phosphatidylinositol 4-phosphate 5-kinase 8 (PIP5K8) from Arabidopsis thaliana (Mouse-ear cress).